The chain runs to 565 residues: Arginine--tRNA ligase (565 aa).

The 'HIGH' region motif lies at Pro-121–His-131.

Belongs to the class-I aminoacyl-tRNA synthetase family. In terms of assembly, monomer.

It localises to the cytoplasm. It carries out the reaction tRNA(Arg) + L-arginine + ATP = L-arginyl-tRNA(Arg) + AMP + diphosphate. The sequence is that of Arginine--tRNA ligase from Lactobacillus delbrueckii subsp. bulgaricus (strain ATCC BAA-365 / Lb-18).